The primary structure comprises 204 residues: uncharacterized protein (204 aa).

This is an uncharacterized protein from Dictyostelium discoideum (Social amoeba).